A 250-amino-acid polypeptide reads, in one-letter code: MRKTVIAGNWKMNLSEKEALSLAHSIKEKIPAISKGRISMIFPSTLHLAGVAKILQGTEILVGAQNVYPSGLAAFTGETSPEQLKELGVKVVMIGHSERRQFLGETNSFCNEKIHFLLKNDFIVLYCVGETLMERESGKTFEVISSQIREGLKGIHSHSFSNLILAYEPVWAIGTGKVATPAQAQEVHFFIRKEIAGLFLGAKEIAESISILYGGSVKPDNIQTLLKEKDLDGGLVGGASQKIDTYAGLF.

9–11 (NWK) contacts substrate. Catalysis depends on H96, which acts as the Electrophile. The Proton acceptor role is filled by E168. Substrate contacts are provided by residues G174, S216, and 237-238 (GG).

It belongs to the triosephosphate isomerase family. As to quaternary structure, homodimer.

It localises to the cytoplasm. It catalyses the reaction D-glyceraldehyde 3-phosphate = dihydroxyacetone phosphate. It functions in the pathway carbohydrate biosynthesis; gluconeogenesis. It participates in carbohydrate degradation; glycolysis; D-glyceraldehyde 3-phosphate from glycerone phosphate: step 1/1. Its function is as follows. Involved in the gluconeogenesis. Catalyzes stereospecifically the conversion of dihydroxyacetone phosphate (DHAP) to D-glyceraldehyde-3-phosphate (G3P). This is Triosephosphate isomerase from Leptospira borgpetersenii serovar Hardjo-bovis (strain JB197).